The primary structure comprises 504 residues: Galactokinase (504 aa).

4 residues coordinate alpha-D-galactose: Arg-47, Asp-53, His-54, and Asp-56. Residues Gly-150, Gly-152, Ser-154, and Ser-155 each coordinate ATP. Alpha-D-galactose contacts are provided by Asn-196 and Asp-200. Asp-200 (proton acceptor) is an active-site residue. Residues Ser-244, Asn-245, and Lys-246 each coordinate ATP. Residue Tyr-254 participates in alpha-D-galactose binding.

The protein belongs to the GHMP kinase family. GalK subfamily.

It carries out the reaction alpha-D-galactose + ATP = alpha-D-galactose 1-phosphate + ADP + H(+). The protein operates within carbohydrate metabolism; galactose metabolism. Its function is as follows. Galactokinase is a key enzyme in the galactose metabolism where it catalyzes the conversion of alpha-D-galactose to galactose 1-phosphate. Can also induce the transcription of the gal genes in response to the organism being challenged with galactose as the sole source of carbon. This chain is Galactokinase, found in Candida parapsilosis (Yeast).